A 79-amino-acid polypeptide reads, in one-letter code: MKEQIFDIIETVSGTDEFREDLDMDLFEEGILDSMRAIMLIVELEGAFDISLPPSEMDREDWNTANKIAARVQEKKDEN.

The Carrier domain occupies 1-76 (MKEQIFDIIE…KIAARVQEKK (76 aa)). An O-(pantetheine 4'-phosphoryl)serine modification is found at Ser34.

This sequence belongs to the DltC family. Post-translationally, 4'-phosphopantetheine is transferred from CoA to a specific serine of apo-DCP.

Its subcellular location is the cytoplasm. The protein operates within cell wall biogenesis; lipoteichoic acid biosynthesis. In terms of biological role, carrier protein involved in the D-alanylation of lipoteichoic acid (LTA). The loading of thioester-linked D-alanine onto DltC is catalyzed by D-alanine--D-alanyl carrier protein ligase DltA. The DltC-carried D-alanyl group is further transferred to cell membrane phosphatidylglycerol (PG) by forming an ester bond, probably catalyzed by DltD. D-alanylation of LTA plays an important role in modulating the properties of the cell wall in Gram-positive bacteria, influencing the net charge of the cell wall. The protein is D-alanyl carrier protein of Lactococcus lactis subsp. lactis (strain IL1403) (Streptococcus lactis).